Reading from the N-terminus, the 726-residue chain is L-lysine 6-oxidase (726 aa).

Residues 516–581 (CTIQTVNFSE…LPPAYYSYWW (66 aa)) constitute a cross-link (4'-cysteinyl-tryptophylquinone (Cys-Trp)). Trp581 bears the Tryptophylquinone mark.

As to quaternary structure, homotetramer. Cysteine tryptophylquinone residue is required as a cofactor. Post-translationally, the cysteine tryptophylquinone (CTQ) is generated by oxidation of the indole ring of a tryptophan residue to form tryptophylquinone, followed by covalent cross-linking with a cysteine residue.

It localises to the secreted. It carries out the reaction L-lysine + O2 + H2O = (S)-2-amino-6-oxohexanoate + H2O2 + NH4(+). Inhibited by aminoguanidine, amiloride and beta-aminopropionitrile. In terms of biological role, has antibacterial activity against a wide spectrum of Gram-positive and Gram-negative bacteria including nosocomial isolates of S.aureus and Pseudomonas sp. The antimicrobial activity is due to hydrogen peroxide generated by its lysine oxidase activity. Also has autotoxic activity. Involved in biofilm differentiation; responsible for cell death within microcolonies during biofilm development which is linked to the generation of a phenotypically diverse dispersal population and thus may play a role in colonization. This is L-lysine 6-oxidase (lodA) from Marinomonas mediterranea (strain ATCC 700492 / JCM 21426 / NBRC 103028 / MMB-1).